Reading from the N-terminus, the 101-residue chain is Small ribosomal subunit protein uS10 (101 aa).

Belongs to the universal ribosomal protein uS10 family. In terms of assembly, part of the 30S ribosomal subunit.

Its function is as follows. Involved in the binding of tRNA to the ribosomes. The chain is Small ribosomal subunit protein uS10 from Corynebacterium efficiens (strain DSM 44549 / YS-314 / AJ 12310 / JCM 11189 / NBRC 100395).